The chain runs to 131 residues: MALWLTLVIALTCFGGLASPGPVPPHSTALKELIEELVNITQNQKTPLCNGSMVWSVNLTTSMQYCAALESLINISDCSAIQKTQRMLSALCSHKPPSEQVPGKHIRDTKIEVAQFVKDLLKHLRMIFRHG.

The signal sequence occupies residues 1 to 18 (MALWLTLVIALTCFGGLA). Residues Asn39, Asn50, Asn58, and Asn74 are each glycosylated (N-linked (GlcNAc...) asparagine). Cystine bridges form between Cys49/Cys78 and Cys66/Cys92.

This sequence belongs to the IL-4/IL-13 family. Interacts with IL13RA2.

Its subcellular location is the secreted. Its function is as follows. Cytokine that plays important roles in allergic inflammation and immune response to parasite infection. Synergizes with IL2 in regulating interferon-gamma synthesis. Stimulates B-cell proliferation, and activation of eosinophils, basophils, and mast cells. Plays an important role in controlling IL33 activity by modulating the production of transmembrane and soluble forms of interleukin-1 receptor-like 1/IL1RL1. Displays the capacity to antagonize Th1-driven proinflammatory immune response and downregulates synthesis of many proinflammatory cytokines including IL1, IL6, IL10, IL12 and TNF-alpha through a mechanism that partially involves suppression of NF-kappa-B. Also functions on nonhematopoietic cells, including endothelial cells where it induces vascular cell adhesion protein 1/VCAM1, which is important in the recruitment of eosinophils. Exerts its biological effects through its receptors which comprises the IL4R chain and the IL13RA1 chain, to activate JAK1 and TYK2, leading to the activation of STAT6. Aside from IL13RA1, another receptor IL13RA2 acts as a high affinity decoy for IL13 and mediates internalization and depletion of extracellular IL13. The chain is Interleukin-13 (IL13) from Sus scrofa (Pig).